The primary structure comprises 1336 residues: Vascular endothelial growth factor receptor 1 (1336 aa).

An N-terminal signal peptide occupies residues M1 to G22. The Extracellular portion of the chain corresponds to Y23–E758. Ig-like C2-type domains are found at residues P32–E121, G151–H214, L230–H327, S335–T421, Q429–R549, P556–V655, and P661–T747. 2 disulfides stabilise this stretch: C53/C107 and C158/C207. N-linked (GlcNAc...) asparagine glycans are attached at residues N100, N164, N196, and N251. C252 and C311 form a disulfide bridge. N-linked (GlcNAc...) asparagine glycosylation is found at N323, N417, N474, N516, N597, N625, N666, and N713. 2 cysteine pairs are disulfide-bonded: C454-C535 and C577-C636. C682 and C731 are oxidised to a cystine. A helical transmembrane segment spans residues L759–I780. Over R781 to A1336 the chain is Cytoplasmic. A Protein kinase domain is found at L827–L1158. ATP-binding positions include L833–V841 and K861. Position 914 is a phosphotyrosine; by autocatalysis (Y914). Over residues K941–L957 the composition is skewed to basic and acidic residues. Residues K941 to G982 are disordered. Residues S959–S969 show a composition bias toward low complexity. D1022 functions as the Proton acceptor in the catalytic mechanism. A phosphotyrosine; by autocatalysis mark is found at Y1053, Y1169, Y1213, Y1242, Y1325, and Y1331. Residues R1304–N1326 are disordered.

This sequence belongs to the protein kinase superfamily. Tyr protein kinase family. CSF-1/PDGF receptor subfamily. Interacts with VEGFA, VEGFB and PGF. Monomer in the absence of bound VEGFA, VEGFB or PGF. Homodimer in the presence of bound VEGFA, VEGFB and PGF. Can also form a heterodimer with KDR. Interacts (tyrosine phosphorylated) with CBL, CRK, GRB2, NCK1, PIK3R1, PLCG, PSEN1 and PTPN11. Probably interacts with PTPRB. Interacts with RACK1. Identified in a complex with CBL and CD2AP. Post-translationally, N-glycosylated. Ubiquitinated after VEGFA-mediated autophosphorylation, leading to proteolytic degradation. In terms of processing, autophosphorylated on tyrosine residues upon ligand binding. Autophosphorylation occurs in trans, i.e. one subunit of the dimeric receptor phosphorylates tyrosine residues on the other subunit. Phosphorylation at Tyr-1169 is important for interaction with PLCG. Phosphorylation at Tyr-1213 is important for interaction with PIK3R1, PTPN11, GRB2, and PLCG. Phosphorylation at Tyr-1331 is important for endocytosis and for interaction with CBL, NCK1 and CRK. Is probably dephosphorylated by PTPRB.

The protein localises to the cell membrane. The protein resides in the endosome. It catalyses the reaction L-tyrosyl-[protein] + ATP = O-phospho-L-tyrosyl-[protein] + ADP + H(+). With respect to regulation, present in an inactive conformation in the absence of bound ligand. Binding of VEGFA, VEGFB or PGF leads to dimerization and activation by autophosphorylation on tyrosine residues. Functionally, tyrosine-protein kinase that acts as a cell-surface receptor for VEGFA, VEGFB and PGF, and plays an essential role in the development of embryonic vasculature, the regulation of angiogenesis, cell survival, cell migration, macrophage function, chemotaxis, and cancer cell invasion. Acts as a positive regulator of postnatal retinal hyaloid vessel regression. May play an essential role as a negative regulator of embryonic angiogenesis by inhibiting excessive proliferation of endothelial cells. Can promote endothelial cell proliferation, survival and angiogenesis in adulthood. Its function in promoting cell proliferation seems to be cell-type specific. Promotes PGF-mediated proliferation of endothelial cells, and proliferation of some types of cancer cells, but does not promote proliferation of normal fibroblasts. Has very high affinity for VEGFA and relatively low protein kinase activity; may function as a negative regulator of VEGFA signaling by limiting the amount of free VEGFA and preventing its binding to KDR. Modulates KDR signaling by forming heterodimers with KDR. Ligand binding leads to the activation of several signaling cascades. Activation of PLCG leads to the production of the cellular signaling molecules diacylglycerol and inositol 1,4,5-trisphosphate and the activation of protein kinase C. Mediates phosphorylation of PIK3R1, the regulatory subunit of phosphatidylinositol 3-kinase, leading to the activation of phosphatidylinositol kinase and the downstream signaling pathway. Mediates activation of MAPK1/ERK2, MAPK3/ERK1 and the MAP kinase signaling pathway, as well as of the AKT1 signaling pathway. Phosphorylates SRC, YES1 and PLCG, and may also phosphorylate CBL. Promotes phosphorylation of AKT1 and PTK2/FAK1. This Rattus norvegicus (Rat) protein is Vascular endothelial growth factor receptor 1 (Flt1).